The sequence spans 245 residues: Small ribosomal subunit protein uS2 (245 aa).

Belongs to the universal ribosomal protein uS2 family.

The sequence is that of Small ribosomal subunit protein uS2 from Pseudomonas fluorescens (strain Pf0-1).